A 278-amino-acid polypeptide reads, in one-letter code: Cell division protein FtsQ (278 aa).

Residues 1 to 6 are Cytoplasmic-facing; it reads MNATLR. Residues 7 to 27 traverse the membrane as a helical segment; it reads ILAWLIAVALVALPVVAVLNG. At 28-278 the chain is on the periplasmic side; sequence WVGAERWPLA…SPFAIPGFKT (251 aa). Positions 34 to 103 constitute a POTRA domain; sequence WPLARLRVSG…DVLEVHVVEH (70 aa).

It belongs to the FtsQ/DivIB family. FtsQ subfamily. Part of a complex composed of FtsB, FtsL and FtsQ.

Its subcellular location is the cell inner membrane. In terms of biological role, essential cell division protein. May link together the upstream cell division proteins, which are predominantly cytoplasmic, with the downstream cell division proteins, which are predominantly periplasmic. May control correct divisome assembly. This is Cell division protein FtsQ from Xanthomonas campestris pv. campestris (strain ATCC 33913 / DSM 3586 / NCPPB 528 / LMG 568 / P 25).